We begin with the raw amino-acid sequence, 358 residues long: Phospho-N-acetylmuramoyl-pentapeptide-transferase (358 aa).

A run of 10 helical transmembrane segments spans residues alanine 26–aspartate 46, glycine 70–tryptophan 90, threonine 94–valine 114, methionine 134–phenylalanine 154, glutamate 169–valine 189, glycine 197–alanine 217, alanine 234–phenylalanine 254, valine 261–isoleucine 281, isoleucine 286–valine 306, and lysine 335–leucine 355.

This sequence belongs to the glycosyltransferase 4 family. MraY subfamily. The cofactor is Mg(2+).

The protein resides in the cell inner membrane. The enzyme catalyses UDP-N-acetyl-alpha-D-muramoyl-L-alanyl-gamma-D-glutamyl-meso-2,6-diaminopimeloyl-D-alanyl-D-alanine + di-trans,octa-cis-undecaprenyl phosphate = di-trans,octa-cis-undecaprenyl diphospho-N-acetyl-alpha-D-muramoyl-L-alanyl-D-glutamyl-meso-2,6-diaminopimeloyl-D-alanyl-D-alanine + UMP. The protein operates within cell wall biogenesis; peptidoglycan biosynthesis. Catalyzes the initial step of the lipid cycle reactions in the biosynthesis of the cell wall peptidoglycan: transfers peptidoglycan precursor phospho-MurNAc-pentapeptide from UDP-MurNAc-pentapeptide onto the lipid carrier undecaprenyl phosphate, yielding undecaprenyl-pyrophosphoryl-MurNAc-pentapeptide, known as lipid I. In Syntrophotalea carbinolica (strain DSM 2380 / NBRC 103641 / GraBd1) (Pelobacter carbinolicus), this protein is Phospho-N-acetylmuramoyl-pentapeptide-transferase.